The sequence spans 128 residues: NADH dehydrogenase [ubiquinone] 1 beta subcomplex subunit 6 (128 aa).

Ser-2 is modified (N-acetylserine). Lys-24 carries the post-translational modification N6-acetyllysine. Residues 64–86 form a helical membrane-spanning segment; sequence AYRSSLFAVSHVLIPMWFVHYYV.

Belongs to the complex I NDUFB6 subunit family. Complex I is composed of 45 different subunits.

Its subcellular location is the mitochondrion inner membrane. Its function is as follows. Accessory subunit of the mitochondrial membrane respiratory chain NADH dehydrogenase (Complex I), that is believed not to be involved in catalysis. Complex I functions in the transfer of electrons from NADH to the respiratory chain. The immediate electron acceptor for the enzyme is believed to be ubiquinone. This chain is NADH dehydrogenase [ubiquinone] 1 beta subcomplex subunit 6 (Ndufb6), found in Mus musculus (Mouse).